The chain runs to 76 residues: MKLIIFAAISVAFMSFDQVLGSMLHGVKSEEAMMIADGSVVKPIDHGGPTTEPDGCQVCIAYNWGCSACQRKKNGK.

The signal sequence occupies residues 1 to 21 (MKLIIFAAISVAFMSFDQVLG).

Belongs to the CPGH1 family.

The protein localises to the secreted. The protein resides in the host cell. It localises to the host cytoplasm. It is found in the host nucleus. In terms of biological role, rust effector delivered into infected tissues to modulate host functions and contribute to pathogen virulence. Enhances leaf colonization by the bacteria Pseudomonas syringae and the oomycete Hyaloperonospora arabidopsidis pathogens in an Arabidopsis thaliana infection model. The sequence is that of Candidate secreted effector protein MPL124497 from Melampsora larici-populina (strain 98AG31 / pathotype 3-4-7) (Poplar leaf rust fungus).